Reading from the N-terminus, the 261-residue chain is Histone H3-like centromeric protein cpar-1 (261 aa).

Positions 80-150 (TVGSNSTNLV…AGSSSSDRVR (71 aa)) are disordered. The segment covering 113-127 (AANSHHQSPINVGNR) has biased composition (polar residues). A compositionally biased stretch (low complexity) spans 132–146 (GTNGRNGSRAGSSSS). The tract at residues 164 to 261 (YRPGQKALEE…LYRRLCLPNL (98 aa)) is H3-like.

This sequence belongs to the histone H3 family. In terms of assembly, forms a nucleosome-like histone octamer containing two molecules each of H2A, H2B, cpar-1 and H4 assembled in one cpar-1-H4 heterotetramer and two H2A-H2B heterodimers. Post-translationally, cleaved at the onset of meiotic anaphase I, likely by separase sep-1.

It is found in the nucleus. Its subcellular location is the chromosome. In terms of biological role, histone H3-like variant which exclusively replaces conventional H3 in the nucleosome core of centromeric chromatin at the inner plate of the kinetochore. Required for recruitment and assembly of kinetochore proteins, mitotic progression and chromosome segregation. May serve as an epigenetic mark that propagates centromere identity through replication and cell division. Not required for chromosome segregation during meiosis. This is Histone H3-like centromeric protein cpar-1 from Caenorhabditis elegans.